We begin with the raw amino-acid sequence, 208 residues long: Peptidyl-prolyl cis-trans isomerase FKBP13, chloroplastic (208 aa).

2 cysteine pairs are disulfide-bonded: Cys-84-Cys-96 and Cys-185-Cys-190. The region spanning 109–208 is the PPIase FKBP-type domain; it reads GQLIKAHYVG…LFDIEYIGKA (100 aa).

This sequence belongs to the FKBP-type PPIase family. As to quaternary structure, interacts in vitro with LTO1. The precursor, but not the mature form of the protein, interacts with the Rieske protein. Expressed in stems, leaves and developing flower buds, but not in roots.

The protein resides in the plastid. Its subcellular location is the chloroplast thylakoid lumen. It carries out the reaction [protein]-peptidylproline (omega=180) = [protein]-peptidylproline (omega=0). With respect to regulation, PPIase activity is optimal in oxidized form (S-S) and minimal in reduced form (SH). Reduction of the oxidized form is mediated by thioredoxin (TRX-M). PPIases accelerate the folding of proteins. It catalyzes the cis-trans isomerization of proline imidic peptide bonds in oligopeptides. Responsive of the major PPIase activity in the chloroplast thylakoid lumen. Regulates the accumulation of Rieske protein, an essential component of the photosynthetic electron transport chain. In Arabidopsis thaliana (Mouse-ear cress), this protein is Peptidyl-prolyl cis-trans isomerase FKBP13, chloroplastic.